A 202-amino-acid chain; its full sequence is MKALTARQQEVFDLIRDHISQTGMPPTRAEIAQRLGFRSPNAAEEHLKALARKGVLEIVSGASRGIRLLVEEETGIPLIGRVAAGEPLLAQQHIEGHYQVDPGMFKPSADFLLRVSGMSMKDIGILDGDLLAVHKTQDVRNGQVVVARIDDEVTVKRLKKQGNTVQLLPENSEFSPIVVDLREQTFSIEGLAVGVIRNGEWL.

The H-T-H motif DNA-binding region spans 28–48 (RAEIAQRLGFRSPNAAEEHLK). Residues Ser119 and Lys156 each act as for autocatalytic cleavage activity in the active site.

The protein belongs to the peptidase S24 family. Homodimer.

It catalyses the reaction Hydrolysis of Ala-|-Gly bond in repressor LexA.. In terms of biological role, represses a number of genes involved in the response to DNA damage (SOS response), including recA and lexA. Binds to the 16 bp palindromic sequence 5'-CTGTATATATATACAG-3'. In the presence of single-stranded DNA, RecA interacts with LexA causing an autocatalytic cleavage which disrupts the DNA-binding part of LexA, leading to derepression of the SOS regulon and eventually DNA repair. In Enterobacter sp. (strain 638), this protein is LexA repressor.